Consider the following 337-residue polypeptide: uncharacterized protein (337 aa).

Over M1–N10 the chain is Cytoplasmic. Residues E11–F31 form a helical membrane-spanning segment. Topologically, residues D32–N100 are extracellular. Residues I101 to V121 traverse the membrane as a helical segment. The Cytoplasmic segment spans residues E122–D197. Residues N148 to K167 show a composition bias toward low complexity. Residues N148–E179 form a disordered region. The helical transmembrane segment at I198–V218 threads the bilayer. At S219 to N285 the chain is on the extracellular side. The helical transmembrane segment at V286 to L306 threads the bilayer. Residues M307–K337 are Cytoplasmic-facing.

It localises to the membrane. This is an uncharacterized protein from Dictyostelium discoideum (Social amoeba).